A 312-amino-acid chain; its full sequence is MAAAGGITMRQLLEAGVHFGHQTKRWNPKMKPFIFGARNGIYIIDLQKTVVMARSAFRFVADITARGGSVLFVGTKKQAQDVVREEASRAGQFFVTSRWLGGTLTNFKTIKQGIDRLKTLEKMAEDGTFERLPKKEVAQLEREREKLEKNLGGVKEMSKLPRCVFVIDPKKEHIAIHEAGRLGIPVIGLVDTNCDPDGIDFVIPGNDDAIRSIKLFTSKIAEACLEGAARYRASGAAERDEQEEREGRDDRGDRRDDRRGPRRGDRRDDRRDRGGDRGGDRRGPLVEMKGAAPVASAEPAAEAAPEGEAAAE.

The segment at 232–312 is disordered; sequence RASGAAERDE…AAPEGEAAAE (81 aa). A compositionally biased stretch (basic and acidic residues) spans 245-284; it reads REGRDDRGDRRDDRRGPRRGDRRDDRRDRGGDRGGDRRGP. The span at 291-312 shows a compositional bias: low complexity; that stretch reads AAPVASAEPAAEAAPEGEAAAE.

Belongs to the universal ribosomal protein uS2 family.

This chain is Small ribosomal subunit protein uS2, found in Myxococcus xanthus (strain DK1622).